The following is a 627-amino-acid chain: 1-deoxy-D-xylulose-5-phosphate synthase (627 aa).

Residues His72 and Gly113–Ser115 each bind thiamine diphosphate. Mg(2+) is bound at residue Asp144. Thiamine diphosphate contacts are provided by residues Gly145–Ala146, Asn173, Tyr283, and Glu366. Asn173 serves as a coordination point for Mg(2+).

This sequence belongs to the transketolase family. DXPS subfamily. Homodimer. Requires Mg(2+) as cofactor. Thiamine diphosphate serves as cofactor.

It carries out the reaction D-glyceraldehyde 3-phosphate + pyruvate + H(+) = 1-deoxy-D-xylulose 5-phosphate + CO2. The protein operates within metabolic intermediate biosynthesis; 1-deoxy-D-xylulose 5-phosphate biosynthesis; 1-deoxy-D-xylulose 5-phosphate from D-glyceraldehyde 3-phosphate and pyruvate: step 1/1. Its function is as follows. Catalyzes the acyloin condensation reaction between C atoms 2 and 3 of pyruvate and glyceraldehyde 3-phosphate to yield 1-deoxy-D-xylulose-5-phosphate (DXP). This is 1-deoxy-D-xylulose-5-phosphate synthase from Macrococcus caseolyticus (strain JCSC5402) (Macrococcoides caseolyticum).